Here is a 337-residue protein sequence, read N- to C-terminus: Diacylglycerol O-acyltransferase 2-like protein 6 (337 aa).

Transmembrane regions (helical) follow at residues 22-42 and 102-122; these read IPVY…FLLF and YIIA…NFAT.

Belongs to the diacylglycerol acyltransferase family. As to expression, expressed in all tissues tested except pancreas.

The protein localises to the endoplasmic reticulum membrane. It carries out the reaction 1,2-di-(9Z-octadecenoyl)-sn-glycerol + (9Z)-octadecenoyl-CoA = 1,2,3-tri-(9Z-octadecenoyl)-glycerol + CoA. The enzyme catalyses 1-O-(9Z-octadecenyl)-glycerol + (9Z)-octadecenoyl-CoA = 1-O-(9Z-octadecyl)-3-(9Z-octadecenoyl)-glycerol + CoA. The catalysed reaction is 1-(9Z-octadecenoyl)-glycerol + (9Z)-octadecenoyl-CoA = 1,2-di-(9Z-octadecenoyl)-glycerol + CoA. In terms of biological role, diglyceride acyltransferase that uses fatty acyl-CoA as substrate. Particularly active with oleate as a substrate. Has no wax synthase activity to produce wax esters. Able to use 1-monoalkylglycerol (1-MAkG) as an acyl acceptor for the synthesis of monoalkyl-monoacylglycerol (MAMAG). The protein is Diacylglycerol O-acyltransferase 2-like protein 6 of Homo sapiens (Human).